Consider the following 253-residue polypeptide: Ribosomal RNA small subunit methyltransferase A (253 aa).

S-adenosyl-L-methionine contacts are provided by histidine 12, leucine 14, glycine 39, glutamate 60, aspartate 81, and asparagine 104.

Belongs to the class I-like SAM-binding methyltransferase superfamily. rRNA adenine N(6)-methyltransferase family. RsmA subfamily.

It is found in the cytoplasm. The enzyme catalyses adenosine(1518)/adenosine(1519) in 16S rRNA + 4 S-adenosyl-L-methionine = N(6)-dimethyladenosine(1518)/N(6)-dimethyladenosine(1519) in 16S rRNA + 4 S-adenosyl-L-homocysteine + 4 H(+). Functionally, specifically dimethylates two adjacent adenosines (A1518 and A1519) in the loop of a conserved hairpin near the 3'-end of 16S rRNA in the 30S particle. May play a critical role in biogenesis of 30S subunits. The sequence is that of Ribosomal RNA small subunit methyltransferase A from Acidovorax ebreus (strain TPSY) (Diaphorobacter sp. (strain TPSY)).